The sequence spans 506 residues: Cysteine--tRNA ligase (506 aa).

Cysteine 34 contacts Zn(2+). The 'HIGH' region signature appears at 36–46 (PTVYDFAHIGN). Zn(2+) contacts are provided by cysteine 230, histidine 269, and glutamate 273. The short motif at 302–306 (KMSKS) is the 'KMSKS' region element. An ATP-binding site is contributed by lysine 305.

This sequence belongs to the class-I aminoacyl-tRNA synthetase family. As to quaternary structure, monomer. Zn(2+) serves as cofactor.

The protein localises to the cytoplasm. It carries out the reaction tRNA(Cys) + L-cysteine + ATP = L-cysteinyl-tRNA(Cys) + AMP + diphosphate. This is Cysteine--tRNA ligase from Brucella ovis (strain ATCC 25840 / 63/290 / NCTC 10512).